The chain runs to 78 residues: MSKNNLNETESKIEIEAKVVELLSNDKFKVELPNKKTIIAYVSGKIRINNIRILPGDKVRIELSPYYPTQARITYRFK.

An S1-like domain is found at S2 to K78.

It belongs to the IF-1 family. As to quaternary structure, component of the 30S ribosomal translation pre-initiation complex which assembles on the 30S ribosome in the order IF-2 and IF-3, IF-1 and N-formylmethionyl-tRNA(fMet); mRNA recruitment can occur at any time during PIC assembly.

It is found in the cytoplasm. One of the essential components for the initiation of protein synthesis. Stabilizes the binding of IF-2 and IF-3 on the 30S subunit to which N-formylmethionyl-tRNA(fMet) subsequently binds. Helps modulate mRNA selection, yielding the 30S pre-initiation complex (PIC). Upon addition of the 50S ribosomal subunit IF-1, IF-2 and IF-3 are released leaving the mature 70S translation initiation complex. This chain is Translation initiation factor IF-1, found in Aster yellows witches'-broom phytoplasma (strain AYWB).